The sequence spans 302 residues: MSKKVLVFGGTGYQGGSVVRELLKDDSFKVITLSRNPESEKCKELKKLGADVIKCDESQPKEEIEKVMKGCDCVYLVTNSQGYCEKEIEYGIKVADVALKCGVKHFIFSTVPGPNKLSNGKFKSPDLDNKVEIEQHIRQLSKSNPEFISSFVIAPWYFQNFINYYQPEKESSTSDKYILKWACDPKVSLDYGDIDELGLLVREIFKNPIKFSGETVPFSSEILTPIQIVEIISKVTNKKVSYQFIDPVEYGKSYDLEVSLMLAFFNEYGGFNIYGGDRSIAHNIKKLTSFEEYLKKINYKLD.

Residues 9 to 14 (GGTGYQ), 35 to 39 (RNPES), 56 to 57 (DE), 78 to 80 (TNS), Lys-130, and 157 to 160 (YFQN) each bind NADP(+).

Belongs to the NmrA-type oxidoreductase family.

Its function is as follows. May be a redox sensor protein. In Dictyostelium discoideum (Social amoeba), this protein is NmrA-like family domain-containing protein DDB_G0286605.